A 225-amino-acid chain; its full sequence is ATP-dependent dethiobiotin synthetase BioD (225 aa).

13-18 is an ATP binding site; the sequence is NVGKTL. Residue threonine 17 participates in Mg(2+) binding. Lysine 38 is a catalytic residue. A substrate-binding site is contributed by threonine 42. ATP contacts are provided by residues aspartate 55, 116 to 119, 176 to 177, and 205 to 207; these read EGAG, NH, and PWL. Residues aspartate 55 and glutamate 116 each coordinate Mg(2+).

The protein belongs to the dethiobiotin synthetase family. In terms of assembly, homodimer. Requires Mg(2+) as cofactor.

The protein localises to the cytoplasm. The enzyme catalyses (7R,8S)-7,8-diammoniononanoate + CO2 + ATP = (4R,5S)-dethiobiotin + ADP + phosphate + 3 H(+). Its pathway is cofactor biosynthesis; biotin biosynthesis; biotin from 7,8-diaminononanoate: step 1/2. In terms of biological role, catalyzes a mechanistically unusual reaction, the ATP-dependent insertion of CO2 between the N7 and N8 nitrogen atoms of 7,8-diaminopelargonic acid (DAPA, also called 7,8-diammoniononanoate) to form a ureido ring. The chain is ATP-dependent dethiobiotin synthetase BioD from Baumannia cicadellinicola subsp. Homalodisca coagulata.